Reading from the N-terminus, the 255-residue chain is Placenta-expressed transcript 1 protein (255 aa).

An N-terminal signal peptide occupies residues 1–26 (MPALRTLLPHLGLFLCLALCFSPSFS). N-linked (GlcNAc...) asparagine glycans are attached at residues asparagine 57, asparagine 67, and asparagine 126. Serine 236 carries the GPI-anchor amidated serine lipid modification. Positions 237–255 (PLAGALHILLVFLISKLLF) are cleaved as a propeptide — removed in mature form.

In terms of processing, N-glycosylated. GPI-anchored.

It localises to the apical cell membrane. Its function is as follows. Modulates leading keratinocyte migration and cellular adhesion to matrix proteins during a wound-healing response and promotes wound repair. May play a role during trichilemmal differentiation of the hair follicle. In Rattus norvegicus (Rat), this protein is Placenta-expressed transcript 1 protein (Plet1).